A 189-amino-acid polypeptide reads, in one-letter code: 3-isopropylmalate dehydratase small subunit (189 aa).

Belongs to the LeuD family. LeuD type 1 subfamily. In terms of assembly, heterodimer of LeuC and LeuD.

The enzyme catalyses (2R,3S)-3-isopropylmalate = (2S)-2-isopropylmalate. It participates in amino-acid biosynthesis; L-leucine biosynthesis; L-leucine from 3-methyl-2-oxobutanoate: step 2/4. Functionally, catalyzes the isomerization between 2-isopropylmalate and 3-isopropylmalate, via the formation of 2-isopropylmaleate. The polypeptide is 3-isopropylmalate dehydratase small subunit (Staphylococcus epidermidis (strain ATCC 35984 / DSM 28319 / BCRC 17069 / CCUG 31568 / BM 3577 / RP62A)).